The following is a 117-amino-acid chain: MIRIKDNFKNYKKHKKILKLSKGFIGSNSKIFKISNQKIMKALYFSFSDRKKKKRSNKKIWINRINYFLKNYFFNNFNYNKIINKIKLNKICINKKILSEIIINDYKTIYKLKNMLT.

Belongs to the bacterial ribosomal protein bL20 family.

It is found in the plastid. Binds directly to 23S ribosomal RNA and is necessary for the in vitro assembly process of the 50S ribosomal subunit. It is not involved in the protein synthesizing functions of that subunit. In Euglena longa (Euglenophycean alga), this protein is Large ribosomal subunit protein bL20c (rpl20).